Reading from the N-terminus, the 176-residue chain is Disulfide bond formation protein B (176 aa).

At 1–13 the chain is on the cytoplasmic side; it reads MQFLNTFSKSRIS. Residues 14–30 form a helical membrane-spanning segment; sequence WLLLLLCIVFFEGSALF. The Periplasmic segment spans residues 31–48; sequence FQHGMKLGPCVMCIYERV. A disulfide bridge links Cys40 with Cys43. Residues 49 to 64 traverse the membrane as a helical segment; that stretch reads AMMGIAFAALLGAIAP. At 65–71 the chain is on the cytoplasmic side; that stretch reads QYAIIRW. The chain crosses the membrane as a helical span at residues 72 to 89; it reads AGLIAWGYSAVRGLQLSI. Over 90-144 the chain is Periplasmic; it reads EHVGYQFNPSPFATCDLFVQFPNWAPLNKWVPWMFEAYGNCAEVVWTFLGQSMPQ. Cys104 and Cys130 are oxidised to a cystine. A helical transmembrane segment spans residues 145-163; sequence WLVIIFAGNLVALALIVIA. The Cytoplasmic segment spans residues 164–176; sequence QFFSKKTNTILDM.

This sequence belongs to the DsbB family.

It localises to the cell inner membrane. In terms of biological role, required for disulfide bond formation in some periplasmic proteins. Acts by oxidizing the DsbA protein. This chain is Disulfide bond formation protein B, found in Photobacterium profundum (strain SS9).